Here is an 849-residue protein sequence, read N- to C-terminus: MDCMKKLKVEGTLELNLDDKDVRKNLKSLEKIKSKLEIESNINAVIKQLDELKNVKSEVEFKSNINMIIRELEEIEADASKMNINFDYDLSKLKSELEQLKNTKIDIKTNTDQILKQINKIKSELSEKQTIRAKVEVDRTEWDKLKKEWSEKYHINAIADVASVGTAYMGISDAEKYNELMTILRERGLTKDQAERLIQIGLYNGYSLDEIRDGIVYSNEAVLKLAASNDKYAAQILAAMAMAERGGEPGADDIARMISALTAMGKSNEEIMKMVNAEVLEMKQGHTEVAEAIREFSITMGDTLDPEKFASILIQAQAAGAQDVGQLAEAINDLALNSRQMGFDVEKALREIQKTKDDKTLAELAKKYGLTYEQIVKIHDYLQRVDLDKGLPDNTNELDRLISINKDQKGILETIKQDIEGWLAGHGYLQYGAELGVGLGGLGKILEIAIGAAIGSALKDAFGEIKSTLFGKISLDNLKLPELSKIKLPVDLEIPKIPKISMPKIKLPVDLKLPKIPKINIPKINLPNVSGLSNAFKGLGEAVRFAGRAFGFLSVVVEPVKQLLEGDIQGAIEHLKVGLIELAAWPVALGEALAAVTLAVGDFLGLFDLDGDSPLSAARAGILTLLAAFESIYSFITGDWSVVQNTLQEAFEELGMKEDEARQAAENLAQQWQQLPQQILDAFNGFVDNIKQTFDEWWNGLNEWWSQKIEEAKNWGSDLIQNIIDGIKEKFSELENAVSQAAGIISSYLHHTTPDVGPLKDDDKWGIHFMENIIGGIRKEIPNLKKTIDYTAKLMSSANPKNWKIQQVGITHSTSYSYGDIHINVVGNSFNEHQLAQKIALILKKQRFR.

The next 2 membrane-spanning stretches (helical) occupy residues 587 to 607 (VALGEALAAVTLAVGDFLGLF) and 620 to 640 (AGILTLLAAFESIYSFITGDW).

The protein resides in the cell membrane. This is an uncharacterized protein from Methanocaldococcus jannaschii (strain ATCC 43067 / DSM 2661 / JAL-1 / JCM 10045 / NBRC 100440) (Methanococcus jannaschii).